Here is a 337-residue protein sequence, read N- to C-terminus: MNKQDFYFDLPSELIAQYPLANRSDSRLLIYNRQTEEYGHYQFREIADFLQPGDLLVMNDSKVIPARLYGHKATGGKVELLVERITGDFTFLAHIKASKSLKSNDLIYLDAGKRLEVLQRQDDLFLCKASENILDLLNDLGHIPLPPYIDREDESLDKERYQTVYAKCAGSVAAPTAGLHFDEAVLSSIRARGVNIAYITLHVGAGTFRPVRCERIQDHKMHSEWFTVSPDLCTAVKAAKSMGNRVIAVGTTALRSLESAAMGGELIPCSRDTDIFIYPGYQFKVCDGLITNFHLPESTLVMLVSAFIGHQECMALYQEAIDKRYRFFSYGDASLLL.

It belongs to the QueA family. In terms of assembly, monomer.

The protein localises to the cytoplasm. It carries out the reaction 7-aminomethyl-7-carbaguanosine(34) in tRNA + S-adenosyl-L-methionine = epoxyqueuosine(34) in tRNA + adenine + L-methionine + 2 H(+). It functions in the pathway tRNA modification; tRNA-queuosine biosynthesis. Transfers and isomerizes the ribose moiety from AdoMet to the 7-aminomethyl group of 7-deazaguanine (preQ1-tRNA) to give epoxyqueuosine (oQ-tRNA). This is S-adenosylmethionine:tRNA ribosyltransferase-isomerase from Legionella pneumophila (strain Lens).